The following is a 290-amino-acid chain: Signal peptidase I (290 aa).

The Cytoplasmic portion of the chain corresponds to 1–13; sequence MKFLRSVYAFCSS. A helical membrane pass occupies residues 14 to 34; the sequence is WVGTIIIVLLVIFFIAQAFII. At 35-290 the chain is on the extracellular side; the sequence is PSRSMVGTLY…KIIKKEKATH (256 aa). Residues Ser38 and Lys106 contribute to the active site.

The protein belongs to the peptidase S26 family.

It is found in the cell membrane. It catalyses the reaction Cleavage of hydrophobic, N-terminal signal or leader sequences from secreted and periplasmic proteins.. The polypeptide is Signal peptidase I (lepB) (Helicobacter pylori (strain J99 / ATCC 700824) (Campylobacter pylori J99)).